Reading from the N-terminus, the 353-residue chain is Methylthioribose-1-phosphate isomerase (353 aa).

Substrate contacts are provided by residues 51–53 (RGA), Arg-94, and Gln-199. The active-site Proton donor is Asp-240. Substrate is bound at residue 250-251 (NK).

This sequence belongs to the eIF-2B alpha/beta/delta subunits family. MtnA subfamily. In terms of assembly, homodimer.

The catalysed reaction is 5-(methylsulfanyl)-alpha-D-ribose 1-phosphate = 5-(methylsulfanyl)-D-ribulose 1-phosphate. The protein operates within amino-acid biosynthesis; L-methionine biosynthesis via salvage pathway; L-methionine from S-methyl-5-thio-alpha-D-ribose 1-phosphate: step 1/6. Functionally, catalyzes the interconversion of methylthioribose-1-phosphate (MTR-1-P) into methylthioribulose-1-phosphate (MTRu-1-P). This is Methylthioribose-1-phosphate isomerase from Bacillus licheniformis (strain ATCC 14580 / DSM 13 / JCM 2505 / CCUG 7422 / NBRC 12200 / NCIMB 9375 / NCTC 10341 / NRRL NRS-1264 / Gibson 46).